We begin with the raw amino-acid sequence, 127 residues long: MIQGIGVDIVDIARMQQRIDAASGFRELVFSPAEITYCESKANKYESYAARFAAKEAFLKAVGIGIDFSIDLNQIEITNNKAGKPYFVYTKQVEALLLTHIGFVPDAQVSLSHSREQAIAFVLFNKN.

Residues aspartate 8 and glutamate 56 each contribute to the Mg(2+) site.

It belongs to the P-Pant transferase superfamily. AcpS family. Requires Mg(2+) as cofactor.

It localises to the cytoplasm. The enzyme catalyses apo-[ACP] + CoA = holo-[ACP] + adenosine 3',5'-bisphosphate + H(+). In terms of biological role, transfers the 4'-phosphopantetheine moiety from coenzyme A to a Ser of acyl-carrier-protein. This chain is Holo-[acyl-carrier-protein] synthase, found in Cytophaga hutchinsonii (strain ATCC 33406 / DSM 1761 / CIP 103989 / NBRC 15051 / NCIMB 9469 / D465).